Reading from the N-terminus, the 240-residue chain is tRNA (guanine-N(7)-)-methyltransferase (240 aa).

Residues 1–20 form a disordered region; it reads MTESHDTPITPDGEARPHRR. S-adenosyl-L-methionine is bound by residues glutamate 70, glutamate 95, aspartate 122, and aspartate 145. The active site involves aspartate 145. Residues lysine 149, aspartate 181, and 218–221 each bind substrate; that span reads TKFE.

It belongs to the class I-like SAM-binding methyltransferase superfamily. TrmB family.

It carries out the reaction guanosine(46) in tRNA + S-adenosyl-L-methionine = N(7)-methylguanosine(46) in tRNA + S-adenosyl-L-homocysteine. The protein operates within tRNA modification; N(7)-methylguanine-tRNA biosynthesis. In terms of biological role, catalyzes the formation of N(7)-methylguanine at position 46 (m7G46) in tRNA. The protein is tRNA (guanine-N(7)-)-methyltransferase of Pseudomonas putida (strain ATCC 47054 / DSM 6125 / CFBP 8728 / NCIMB 11950 / KT2440).